The sequence spans 234 residues: Thiamine import ATP-binding protein ThiQ (234 aa).

An ABC transporter domain is found at 2-230; the sequence is LRFSDVKYRY…EKPPELTQYL (229 aa). 32 to 39 is an ATP binding site; it reads GPSGAGKS.

The protein belongs to the ABC transporter superfamily. Thiamine importer (TC 3.A.1.19.1) family. In terms of assembly, the complex is composed of two ATP-binding proteins (ThiQ), two transmembrane proteins (ThiP) and a solute-binding protein (ThiB).

The protein resides in the cell inner membrane. The enzyme catalyses thiamine(out) + ATP + H2O = thiamine(in) + ADP + phosphate + H(+). Part of the ABC transporter complex ThiBPQ involved in thiamine import. Responsible for energy coupling to the transport system. The protein is Thiamine import ATP-binding protein ThiQ of Aliivibrio fischeri (strain ATCC 700601 / ES114) (Vibrio fischeri).